The chain runs to 126 residues: UPF0332 protein glr0978 (126 aa).

This sequence belongs to the UPF0332 family.

This chain is UPF0332 protein glr0978, found in Gloeobacter violaceus (strain ATCC 29082 / PCC 7421).